A 150-amino-acid polypeptide reads, in one-letter code: Nucleoside diphosphate kinase (150 aa).

Residues Lys-9, Phe-57, Arg-85, Thr-91, Arg-102, and Asn-112 each contribute to the ATP site. His-115 (pros-phosphohistidine intermediate) is an active-site residue.

Belongs to the NDK family. In terms of assembly, homotetramer. It depends on Mg(2+) as a cofactor.

The protein resides in the cytoplasm. It catalyses the reaction a 2'-deoxyribonucleoside 5'-diphosphate + ATP = a 2'-deoxyribonucleoside 5'-triphosphate + ADP. The enzyme catalyses a ribonucleoside 5'-diphosphate + ATP = a ribonucleoside 5'-triphosphate + ADP. Its function is as follows. Major role in the synthesis of nucleoside triphosphates other than ATP. The ATP gamma phosphate is transferred to the NDP beta phosphate via a ping-pong mechanism, using a phosphorylated active-site intermediate. The protein is Nucleoside diphosphate kinase of Staphylococcus carnosus (strain TM300).